We begin with the raw amino-acid sequence, 293 residues long: uncharacterized protein (293 aa).

Positions 65 to 89 form a coiled coil; sequence LQKYLENIKNKKLNLNKQSNNQTNN. A disordered region spans residues 81 to 112; the sequence is KQSNNQTNNQTNNQTNNQTNNQTNNIRPQINN.

It is found in the virion. This is an uncharacterized protein from Acanthamoeba polyphaga mimivirus (APMV).